The primary structure comprises 267 residues: MKAEATVIPSRCARGLPSWQVLSPVQPWQTSAPQNTTQPKLLAPHQHEKSQKKSSLLKELGAFHITIALLHLVFGGYLASIVKNLHLVVLKSWYPFWGAASFLISGILAITMKTFSKTYLKMLCLMTNLISLFCVLSGLFVISKDLFLESPFESPIWRMYPNSTVHIQRLELALLCFTVLELFLPVPTAVTAWRGDCPSAKNDDACLVPNTPLHLKGLPVEPPPSYQSVIQGDAQHKQHQRLREVKQVAPDTWIVTDGAAIWTQTAN.

Topologically, residues 1-61 (MKAEATVIPS…KKSSLLKELG (61 aa)) are cytoplasmic. Residues 62–82 (AFHITIALLHLVFGGYLASIV) form a helical membrane-spanning segment. Topologically, residues 83-91 (KNLHLVVLK) are extracellular. The helical transmembrane segment at 92–112 (SWYPFWGAASFLISGILAITM) threads the bilayer. Topologically, residues 113–121 (KTFSKTYLK) are cytoplasmic. Residues 122-142 (MLCLMTNLISLFCVLSGLFVI) traverse the membrane as a helical segment. The Extracellular portion of the chain corresponds to 143 to 171 (SKDLFLESPFESPIWRMYPNSTVHIQRLE). Residues 172 to 192 (LALLCFTVLELFLPVPTAVTA) form a helical membrane-spanning segment. Over 193-267 (WRGDCPSAKN…GAAIWTQTAN (75 aa)) the chain is Cytoplasmic.

This sequence belongs to the MS4A family.

It is found in the membrane. Its function is as follows. May be involved in signal transduction as a component of a multimeric receptor complex. The protein is Membrane-spanning 4-domains subfamily A member 10 (MS4A10) of Homo sapiens (Human).